Consider the following 165-residue polypeptide: Histone H1-like protein HC2 (165 aa).

Composition is skewed to basic residues over residues 1 to 50 (MLGV…KTVA) and 59 to 80 (PVAKKATAKKAPVRKVAAKKTV). Residues 1-80 (MLGVQKKRST…VRKVAAKKTV (80 aa)) form a disordered region.

The protein belongs to the histone H1/H5 family. HCT subfamily.

Its function is as follows. Might have a role in establishing the nucleoid structure of elementary bodies. The sequence is that of Histone H1-like protein HC2 (hctB) from Chlamydia trachomatis.